The following is a 120-amino-acid chain: Large ribosomal subunit protein bL20 (120 aa).

It belongs to the bacterial ribosomal protein bL20 family.

In terms of biological role, binds directly to 23S ribosomal RNA and is necessary for the in vitro assembly process of the 50S ribosomal subunit. It is not involved in the protein synthesizing functions of that subunit. This Xanthobacter autotrophicus (strain ATCC BAA-1158 / Py2) protein is Large ribosomal subunit protein bL20.